Consider the following 938-residue polypeptide: MDDSEVESTASILASVKEQEAQFEKLTRALEEERRHVSAQLERVRVSPQDANSLMANGTLTRRHQNGRFVGDADLERQKFSDLKLNGPQDHNHLLYSTIPRMQEPGQIVETYTEEDPEGAMSVVSVETTDDGTTRRTETTVKKVVKTMTTRTVQPVPMGPDGLPVDASAVSNNYIQTLGRDFRKNGNGGPGPYVGQAGTATLPRNFHYPPDGYGRHYEDGYPGGSDNYGSLSRVTRIEERYRPSMEGYRAPSRQDVYGPQPQVRVGGSSVDLHRFHPEPYGLEDDQRSMGYDDLDYGMMSDYGTARRTGTPSDPRRRLRSYEDMIGEEVPPDQYYWAPLAQHERGSLASLDSLRKGMPPPSNWRQPELPEVIAMLGFRLDAVKSNAAAYLQHLCYRNDKVKTDVRKLKGIPILVGLLDHPKKEVHLGACGALKNISFGRDQDNKIAIKNCDGVPALVRLLRKARDMDLTEVITGTLWNLSSHDSIKMEIVDHALHALTDEVIIPHSGWEREPNEDCKPRHIEWESVLTNTAGCLRNVSSERSEARRKLRECDGLVDALIFIVQAEIGQKDSDSKLVENCVCLLRNLSYQVHREIPQAERYQEALPTVANSTGPHAASCFGAKKGKDEWFSRGKKPTEDPANDTVDFPKRTSPARGYELLFQPEVVRIYISLLKESKTPAILEASAGAIQNLCAGRWTYGRYIRSALRQEKALSAIAELLTSEHERVVKAASGALRNLAVDARNKELIGKHAIPNLVKNLPGGQQNSSWNFSEDTVVSILNTINEVIAENLEAAKKLRETQGIEKLVLINKSGNRSEKEVRAAALVLQTIWGYKELRKPLEKEGWKKSDFQVNLNNASRSQSSHSYDDSTLPLIDRNQKSDKKPDREEIPMSNMGSNTKSLDNNYSTLNERGDHNRTLDRSGDLGDMEPLKGAPLMQKI.

Met1 is subject to N-acetylmethionine. The interval 1–357 (MDDSEVESTA…ASLDSLRKGM (357 aa)) is necessary and sufficient for interaction with CCDC85B. Ser4 carries the post-translational modification Phosphoserine. Residues 10–46 (ASILASVKEQEAQFEKLTRALEEERRHVSAQLERVRV) are a coiled coil. At Ser47 the chain carries Phosphoserine. Thr59 is modified (phosphothreonine). At Tyr112 the chain carries Phosphotyrosine; by FYN. Ser125 bears the Phosphoserine mark. Tyr217 and Tyr221 each carry phosphotyrosine. A Phosphoserine modification is found at Ser225. Tyr228 bears the Phosphotyrosine mark. Ser230 and Ser252 each carry phosphoserine. Tyr257 bears the Phosphotyrosine mark. Residues Ser268 and Ser269 each carry the phosphoserine modification. Position 280 is a phosphotyrosine (Tyr280). Residue Ser288 is modified to Phosphoserine. At Tyr291 the chain carries Phosphotyrosine. Ser300 carries the post-translational modification Phosphoserine. The residue at position 304 (Thr304) is a Phosphothreonine. Phosphoserine occurs at positions 320, 346, 349, and 352. ARM repeat units lie at residues 358 to 395 (PPPSNWRQPELPEVIAMLGFRLDAVKSNAAAYLQHLCY), 398 to 437 (DKVKTDVRKLKGIPILVGLLDHPKKEVHLGACGALKNISF), 441 to 475 (QDNKIAIKNCDGVPALVRLLRKARDMDLTEVITGT), and 476 to 516 (LWNL…NEDC). Residue Lys421 forms a Glycyl lysine isopeptide (Lys-Gly) (interchain with G-Cter in SUMO2) linkage. Lys517 participates in a covalent cross-link: Glycyl lysine isopeptide (Lys-Gly) (interchain with G-Cter in SUMO2). 6 ARM repeats span residues 534-573 (LRNVSSERSEARRKLRECDGLVDALIFIVQAEIGQKDSDS), 583-624 (LRNL…AKKG), 653-693 (ARGY…NLCA), 700-739 (RYIRSALRQEKALSAIAELLTSEHERVVKAASGALRNLAV), 740-780 (DARN…SILN), and 781-826 (TINE…ALVL). Position 617 is a phosphoserine (Ser617). Residues 622–629 (KKGKDEWF) carry the Nuclear localization signal (NLS) motif. Phosphoserine is present on Ser713. Phosphoserine is present on residues Ser811, Ser847, Ser857, Ser859, Ser861, and Ser864. The tract at residues 855–938 (NASRSQSSHS…LKGAPLMQKI (84 aa)) is disordered. The residue at position 865 (Tyr865) is a Phosphotyrosine. Phosphoserine is present on Ser868. Thr869 carries the phosphothreonine modification. The segment covering 875–888 (RNQKSDKKPDREEI) has biased composition (basic and acidic residues). Ser879 is subject to Phosphoserine. Residue Lys882 forms a Glycyl lysine isopeptide (Lys-Gly) (interchain with G-Cter in SUMO2) linkage. Residues 892–908 (NMGSNTKSLDNNYSTLN) show a composition bias toward polar residues. Residue Ser899 is modified to Phosphoserine. Phosphotyrosine is present on Tyr904. Phosphothreonine is present on residues Thr906 and Thr916. The segment covering 909 to 922 (ERGDHNRTLDRSGD) has biased composition (basic and acidic residues). At Ser920 the chain carries Phosphoserine.

Belongs to the beta-catenin family. Belongs to a multiprotein cell-cell adhesion complex that also contains E-cadherin/CDH1, alpha-catenin/CTNNA1, beta-catenin/CTNNB1, and gamma-catenin/JUP. Binds to the C-terminal fragment of PSEN1 and mutually competes for CDH1. Interacts with ZBTB33. Interacts with GLIS2. Interacts with FER. Interacts with NANOS1 (via N-terminal region). Interacts (via N-terminus) with GNA12; the interaction regulates CDH1-mediated cell-cell adhesion. Interacts with GNA13. Component of a cadherin:catenin adhesion complex composed of at least of CDH26, beta-catenin/CTNNB1, alpha-catenin/CTNNA1 and p120 catenin/CTNND1. Interacts with CCDC85B. Interacts with PLPP3; negatively regulates the PLPP3-mediated stabilization of CTNNB1. Interacts with DSG3; the interaction facilitates DSG3 localization and retention at cell-cell junctions. Interacts with CTNND1/p120-catenin; the interaction controls CADH5 endocytosis. Post-translationally, phosphorylated by FER and other protein-tyrosine kinases. Phosphorylated at Ser-288 by PAK5. Dephosphorylated by PTPRJ. In terms of tissue distribution, expressed in basal keratinocytes (at protein level).

The protein resides in the cell junction. It is found in the adherens junction. Its subcellular location is the cytoplasm. It localises to the nucleus. The protein localises to the cell membrane. Key regulator of cell-cell adhesion that associates with and regulates the cell adhesion properties of both C-, E- and N-cadherins, being critical for their surface stability. Promotes localization and retention of DSG3 at cell-cell junctions, via its interaction with DSG3. Beside cell-cell adhesion, regulates gene transcription through several transcription factors including ZBTB33/Kaiso2 and GLIS2, and the activity of Rho family GTPases and downstream cytoskeletal dynamics. Implicated both in cell transformation by SRC and in ligand-induced receptor signaling through the EGF, PDGF, CSF-1 and ERBB2 receptors. This is Catenin delta-1 (Ctnnd1) from Mus musculus (Mouse).